A 785-amino-acid chain; its full sequence is Gamma-interferon-inducible protein 16 (785 aa).

The region spanning Tyr-5–Leu-92 is the Pyrin domain. Position 45 is an N6-acetyllysine (Lys-45). The span at Lys-88–Lys-99 shows a compositional bias: basic residues. A disordered region spans residues Lys-88–Arg-196. A Phosphoserine modification is found at Ser-95. Positions Arg-96–Lys-100 match the Nuclear localization signal motif. Position 99 is an N6-acetyllysine (Lys-99). Low complexity predominate over residues Ala-104–Thr-114. A Phosphoserine modification is found at Ser-106. Lys-116 participates in a covalent cross-link: Glycyl lysine isopeptide (Lys-Gly) (interchain with G-Cter in SUMO2). At Lys-128 the chain carries N6-acetyllysine; alternate. Residue Lys-128 forms a Glycyl lysine isopeptide (Lys-Gly) (interchain with G-Cter in SUMO2); alternate linkage. Short sequence motifs (nuclear localization signal) lie at residues Lys-128 to Lys-131, Lys-134 to Lys-136, and Lys-140 to Lys-143. Over residues Ser-166 to Thr-182 the composition is skewed to low complexity. 2 positions are modified to phosphoserine: Ser-168 and Ser-174. Residues Gln-192–Asn-393 are interaction with TP53 C-terminus. In terms of domain architecture, HIN-200 1 spans Ala-193–Asn-393. Lys-214 is subject to N6-acetyllysine. The disordered stretch occupies residues Ile-388–Thr-442. Positions Gln-406–Pro-422 are enriched in polar residues. Lys-444 and Lys-451 each carry N6-acetyllysine. The HIN-200 2 domain occupies Glu-566–Lys-765. Positions Asp-571–Asn-766 are interaction with TP53 core domain. Residue Ser-575 is modified to Phosphoserine. Residues Lys-598 and Lys-614 each carry the N6-acetyllysine modification. A Glycyl lysine isopeptide (Lys-Gly) (interchain with G-Cter in SUMO2) cross-link involves residue Lys-683. Ser-780 carries the post-translational modification Phosphoserine.

Belongs to the HIN-200 family. In terms of assembly, forms homooligomers. Interacts with TMEM173, AIM2, PYCARD and CASP1. Interacts with BRCA1, TP53, E2F1, RB1 and SP1. Interacts with MTA1. Interacts with MTA1. Interacts with PYDC5. Lysine acetylation in the multipartite nuclear localization signal (NLS) regulates the subcellular location. Post-translationally, phosphorylated on Ser and Thr.

It is found in the nucleus. It localises to the cytoplasm. Functionally, binds double-stranded DNA. Binds preferentially to supercoiled DNA and cruciform DNA structures. Seems to be involved in transcriptional regulation. May function as a transcriptional repressor. Could have a role in the regulation of hematopoietic differentiation through activation of unknown target genes. Controls cellular proliferation by modulating the functions of cell cycle regulatory factors including p53/TP53 and the retinoblastoma protein. May be involved in TP53-mediated transcriptional activation by enhancing TP53 sequence-specific DNA binding and modulating TP53 phosphorylation status. Seems to be involved in energy-level-dependent activation of the ATM/ AMPK/TP53 pathway coupled to regulation of autophagy. May be involved in regulation of TP53-mediated cell death also involving BRCA1. May be involved in the senescence of prostate epithelial cells. Involved in innate immune response by recognizing viral dsDNA in the cytosol and probably in the nucleus. After binding to viral DNA in the cytoplasm recruits TMEM173/STING and mediates the induction of IFN-beta. Has anti-inflammatory activity and inhibits the activation of the AIM2 inflammasome, probably via association with AIM2. Proposed to bind viral DNA in the nucleus and to induce the formation of nuclear caspase-1-activating inflammasome formation via association with PYCARD. Inhibits replication of herpesviruses probably by interfering with promoter recruitment of members of the Sp1 family of transcription factors. The chain is Gamma-interferon-inducible protein 16 (IFI16) from Pongo abelii (Sumatran orangutan).